The chain runs to 180 residues: D-glycero-beta-D-manno-heptose-1,7-bisphosphate 7-phosphatase (180 aa).

Asp-14 functions as the Nucleophile in the catalytic mechanism. The Mg(2+) site is built by Asp-14 and Asp-16. Residues 14–16, 22–25, and 56–59 each bind substrate; these read DRD, NDHY, and TNQS. The active-site Proton donor is Asp-16. Positions 95, 97, 110, and 112 each coordinate Zn(2+). 113-114 is a binding site for substrate; that stretch reads RK. A Mg(2+)-binding site is contributed by Asp-139.

Belongs to the gmhB family. As to quaternary structure, monomer. The cofactor is Mg(2+).

The protein localises to the cytoplasm. The catalysed reaction is D-glycero-beta-D-manno-heptose 1,7-bisphosphate + H2O = D-glycero-beta-D-manno-heptose 1-phosphate + phosphate. Its pathway is nucleotide-sugar biosynthesis; ADP-L-glycero-beta-D-manno-heptose biosynthesis; ADP-L-glycero-beta-D-manno-heptose from D-glycero-beta-D-manno-heptose 7-phosphate: step 2/4. It participates in bacterial outer membrane biogenesis; LPS core biosynthesis. Functionally, converts the D-glycero-beta-D-manno-heptose 1,7-bisphosphate (beta-HBP) intermediate into D-glycero-beta-D-manno-heptose 1-phosphate by removing the phosphate group at the C-7 position. Also catalyzes the dephosphorylation of D-glycero-alpha-D-manno-heptose 1,7-bisphosphate in vitro. The protein is D-glycero-beta-D-manno-heptose-1,7-bisphosphate 7-phosphatase of Rhodopseudomonas palustris (strain ATCC BAA-98 / CGA009).